A 371-amino-acid chain; its full sequence is GDSL esterase/lipase At3g27950 (371 aa).

A signal peptide spans 1 to 23 (MAISKITLAIIVLLLGFTEKLSA). The active-site Nucleophile is the S39. N-linked (GlcNAc...) asparagine glycosylation is found at N82, N143, N178, N194, and N315. Residues D334 and H337 contribute to the active site.

It belongs to the 'GDSL' lipolytic enzyme family.

Its subcellular location is the secreted. This Arabidopsis thaliana (Mouse-ear cress) protein is GDSL esterase/lipase At3g27950.